Here is a 229-residue protein sequence, read N- to C-terminus: ATP-dependent dethiobiotin synthetase BioD (229 aa).

15 to 20 (EIGKTL) contributes to the ATP binding site. Position 19 (Thr19) interacts with Mg(2+). Residue Lys40 is part of the active site. ATP contacts are provided by residues Asp57, 118–121 (EGVG), and 207–209 (PRL). Mg(2+) contacts are provided by Asp57 and Glu118.

Belongs to the dethiobiotin synthetase family. As to quaternary structure, homodimer. The cofactor is Mg(2+).

The protein localises to the cytoplasm. The enzyme catalyses (7R,8S)-7,8-diammoniononanoate + CO2 + ATP = (4R,5S)-dethiobiotin + ADP + phosphate + 3 H(+). Its pathway is cofactor biosynthesis; biotin biosynthesis; biotin from 7,8-diaminononanoate: step 1/2. Its function is as follows. Catalyzes a mechanistically unusual reaction, the ATP-dependent insertion of CO2 between the N7 and N8 nitrogen atoms of 7,8-diaminopelargonic acid (DAPA, also called 7,8-diammoniononanoate) to form a ureido ring. This chain is ATP-dependent dethiobiotin synthetase BioD, found in Ralstonia nicotianae (strain ATCC BAA-1114 / GMI1000) (Ralstonia solanacearum).